We begin with the raw amino-acid sequence, 161 residues long: MSSFVTNGYLSVTLEPHELTLDIKTNIRNAVYKTYLHREISGKMAKKIEIREDVELPLGEIVNNSVVINVPCVITYAYYHVGDIVRGTLNIEDESNVTIQCGDLICKLSRDSGTVSFSDSKYCFFRNGNAYDNGSEVTAVLMEAQQGIESSFVFLANIVDS.

The protein belongs to the poxviridae DNA-directed RNA polymerase 18 kDa subunit family. The DNA-dependent RNA polymerase used for intermediate and late genes expression consists of eight subunits Rpo30/OPG66, Rpo7/OPG90, Rpo22/OPG103, Rpo147/OPG105, Rpo18/OPG119, Rpo19/OPG131, Rpo132/OPG151 and Rpo35/OPG156. The same holoenzyme, with the addition of the transcription-specificity factor OPG109, is used for early gene expression.

Its subcellular location is the virion. The catalysed reaction is RNA(n) + a ribonucleoside 5'-triphosphate = RNA(n+1) + diphosphate. Part of the DNA-dependent RNA polymerase which catalyzes the transcription of viral DNA into RNA using the four ribonucleoside triphosphates as substrates. Responsible for the transcription of early, intermediate and late genes. DNA-dependent RNA polymerase associates with the early transcription factor (ETF), itself composed of OPG118 and OPG133, thereby allowing the early genes transcription. Late transcription, and probably also intermediate transcription, require newly synthesized RNA polymerase. The sequence is that of DNA-directed RNA polymerase 18 kDa subunit (OPG119) from Vaccinia virus (strain Copenhagen) (VACV).